The primary structure comprises 626 residues: Myelin-associated glycoprotein (626 aa).

A signal peptide spans Met-1–Gly-19. Residues Gly-20 to Ala-325 are interaction with RTN4R and RTN4RL2. Topologically, residues Gly-20–Pro-516 are extracellular. The Ig-like V-type domain occupies Trp-22 to Asp-120. 3 disulfides stabilise this stretch: Cys-37-Cys-165, Cys-42-Cys-100, and Cys-159-Cys-217. Residue Tyr-65 to Lys-67 participates in a ganglioside GT1b (d18:1(4E)) binding. Asn-99 is a glycosylation site (N-linked (GlcNAc...) asparagine). Residues Arg-118 and Tyr-124–Thr-128 contribute to the a ganglioside GT1b (d18:1(4E)) site. 4 consecutive Ig-like C2-type domains span residues Asn-139–Lys-237, Val-241–Ala-325, Trp-327–Ala-412, and Pro-413–Arg-508. Residues Asn-223 and Asn-246 are each glycosylated (N-linked (GlcNAc...) asparagine). Residues Cys-261 and Cys-305 are joined by a disulfide bond. 2 N-linked (GlcNAc...) asparagine glycosylation sites follow: Asn-315 and Asn-332. Cys-347 and Cys-392 form a disulfide bridge. The N-linked (GlcNAc...) asparagine glycan is linked to Asn-406. 2 disulfide bridges follow: Cys-421-Cys-430 and Cys-432-Cys-488. N-linked (GlcNAc...) asparagine glycosylation is found at Asn-450 and Asn-454. The helical transmembrane segment at Val-517–Thr-536 threads the bilayer. Cys-531 is lipidated: S-palmitoyl cysteine. At Arg-537–Lys-626 the chain is on the cytoplasmic side. A phosphoserine mark is found at Ser-545, Ser-547, and Ser-549. The tract at residues Leu-577–Lys-626 is required for normal axon myelination in the central nervous system. Residues Arg-581–Lys-608 form a disordered region.

This sequence belongs to the immunoglobulin superfamily. SIGLEC (sialic acid binding Ig-like lectin) family. Monomer and homodimer. Interacts (via the first three N-terminal Ig-like domains) with RTN4R and RTN4RL2. Interacts with isoform 2 of BSG. N-glycosylated. In terms of processing, phosphorylated on tyrosine residues. Post-translationally, ubiquitinated, leading to proteasomal degradation. In terms of tissue distribution, detected in myelin. Detected in olfactory bulb and throughout the brain (at protein level). Detected in brain.

It is found in the cell membrane. The protein resides in the membrane raft. Functionally, adhesion molecule that mediates interactions between myelinating cells and neurons by binding to neuronal sialic acid-containing gangliosides and to the glycoproteins RTN4R and RTN4RL2. Not required for initial myelination, but seems to play a role in the maintenance of normal axon myelination. Protects motoneurons against apoptosis, also after injury; protection against apoptosis is probably mediated via interaction with neuronal RTN4R and RTN4RL2. Required to prevent degeneration of myelinated axons in adults; this probably depends on binding to gangliosides on the axon cell membrane. Negative regulator of neurite outgrowth; in dorsal root ganglion neurons the inhibition is mediated primarily via binding to neuronal RTN4R or RTN4RL2 and to a lesser degree via binding to neuronal gangliosides. In cerebellar granule cells the inhibition is mediated primarily via binding to neuronal gangliosides. In sensory neurons, inhibition of neurite extension depends only partially on RTN4R, RTN4RL2 and gangliosides. Inhibits axon longitudinal growth. Inhibits axon outgrowth by binding to RTN4R. Preferentially binds to alpha-2,3-linked sialic acid. Binds ganglioside Gt1b. The chain is Myelin-associated glycoprotein (Mag) from Rattus norvegicus (Rat).